Reading from the N-terminus, the 611-residue chain is MPEIVDTCSLASPASVCRTKHLHLRCSVDFTRRTLTGTAALTVQSQEDNLRSLVLDTKDLTIEKVVINGQEVKYALGERQSYKGSPMEISLPIALSKNQEIVIEISFETSPKSSALQWLTPEQTSGKEHPYLFSQCQAIHCRAILPCQDTPSVKLTYTAEVSVPKELVALMSAIRDGETPDPEDPSRKIYKFIQKVPIPCYLIALVVGALESRQIGPRTLVWSEKEQVEKSAYEFSETESMLKIAEDLGGPYVWGQYDLLVLPPSFPYGGMENPCLTFVTPTLLAGDKSLSNVIAHEISHSWTGNLVTNKTWDHFWLNEGHTVYLERHICGRLFGEKFRHFNALGGWGELQNSVKTFGETHPFTKLVVDLTDIDPDVAYSSVPYEKGFALLFYLEQLLGGPEIFLGFLKAYVEKFSYKSITTDDWKDFLYSYFKDKVDVLNQVDWNAWLYSPGLPPIKPNYDMTLTNACIALSQRWITAKEDDLNSFNATDLKDLSSHQLNEFLAQTLQRAPLPLGHIKRMQEVYNFNAINNSEIRFRWLRLCIQSKWEDAIPLALKMATEQGRMKFTRPLFKDLAAFDKSHDQAVRTYQEHKASMHPVTAMLVGKDLKVD.

At lysine 73 the chain carries N6-acetyllysine. Residues 135 to 137 (QCQ) and 267 to 272 (PYGGME) contribute to the a peptide site. Histidine 296 serves as a coordination point for Zn(2+). Residue glutamate 297 is the Proton acceptor of the active site. 2 residues coordinate Zn(2+): histidine 300 and glutamate 319. N6-acetyllysine is present on lysine 337. Residue tyrosine 384 is the Proton donor of the active site. N6-acetyllysine is present on lysine 414. Serine 416 is modified (phosphoserine). 564-566 (RMK) is an a peptide binding site. At lysine 573 the chain carries N6-acetyllysine.

It belongs to the peptidase M1 family. As to quaternary structure, monomer. Zn(2+) is required as a cofactor. Post-translationally, phosphorylation at Ser-416 inhibits leukotriene-A4 hydrolase activity. In terms of tissue distribution, isoform 1 and isoform 2 are expressed in monocytes, lymphocytes, neutrophils, reticulocytes, platelets and fibroblasts.

It is found in the cytoplasm. It catalyses the reaction leukotriene A4 + H2O = leukotriene B4. The catalysed reaction is (5S,6S)-epoxy-(18R)-hydroxy-(7E,9E,11Z,14Z,16E)-eicosapentaenoate + H2O = resolvin E1. It carries out the reaction (5S,6S)-epoxy-(18S)-hydroxy-(7E,9E,11Z,14Z,16E)-eicosapentaenoate + H2O = 18S-resolvin E1. The enzyme catalyses Release of the N-terminal residue from a tripeptide.. It functions in the pathway lipid metabolism; leukotriene B4 biosynthesis. Inhibited by bestatin. The epoxide hydrolase activity is restrained by suicide inactivation that involves binding of LTA4 to Tyr-379. 4-(4-benzylphenyl)thiazol-2-amine (ARM1) selectively inhibits the epoxide hydrolase activity. Its function is as follows. Bifunctional zinc metalloenzyme that comprises both epoxide hydrolase (EH) and aminopeptidase activities. Acts as an epoxide hydrolase to catalyze the conversion of LTA4 to the pro-inflammatory mediator leukotriene B4 (LTB4). Also has aminopeptidase activity, with high affinity for N-terminal arginines of various synthetic tripeptides. In addition to its pro-inflammatory EH activity, may also counteract inflammation by its aminopeptidase activity, which inactivates by cleavage another neutrophil attractant, the tripeptide Pro-Gly-Pro (PGP), a bioactive fragment of collagen generated by the action of matrix metalloproteinase-9 (MMP9) and prolylendopeptidase (PREPL). Involved also in the biosynthesis of resolvin E1 and 18S-resolvin E1 from eicosapentaenoic acid, two lipid mediators that show potent anti-inflammatory and pro-resolving actions. This is Leukotriene A-4 hydrolase (LTA4H) from Homo sapiens (Human).